A 741-amino-acid chain; its full sequence is uncharacterized protein (741 aa).

A signal peptide spans 1 to 22; that stretch reads MKSVKIIIILALALLIQISHIA.

This is an uncharacterized protein from Archaeoglobus fulgidus (strain ATCC 49558 / DSM 4304 / JCM 9628 / NBRC 100126 / VC-16).